Reading from the N-terminus, the 145-residue chain is Large ribosomal subunit protein uL11 (145 aa).

This sequence belongs to the universal ribosomal protein uL11 family. As to quaternary structure, part of the ribosomal stalk of the 50S ribosomal subunit. Interacts with L10 and the large rRNA to form the base of the stalk. L10 forms an elongated spine to which L12 dimers bind in a sequential fashion forming a multimeric L10(L12)X complex. In terms of processing, one or more lysine residues are methylated.

In terms of biological role, forms part of the ribosomal stalk which helps the ribosome interact with GTP-bound translation factors. This chain is Large ribosomal subunit protein uL11, found in Coxiella burnetii (strain CbuK_Q154) (Coxiella burnetii (strain Q154)).